The following is a 150-amino-acid chain: Deoxyuridine 5'-triphosphate nucleotidohydrolase (150 aa).

Substrate is bound by residues 69-71, N82, and 86-88; these read RSG and LID.

Belongs to the dUTPase family. Mg(2+) serves as cofactor.

It carries out the reaction dUTP + H2O = dUMP + diphosphate + H(+). It functions in the pathway pyrimidine metabolism; dUMP biosynthesis; dUMP from dCTP (dUTP route): step 2/2. Its function is as follows. This enzyme is involved in nucleotide metabolism: it produces dUMP, the immediate precursor of thymidine nucleotides and it decreases the intracellular concentration of dUTP so that uracil cannot be incorporated into DNA. The polypeptide is Deoxyuridine 5'-triphosphate nucleotidohydrolase (Chromobacterium violaceum (strain ATCC 12472 / DSM 30191 / JCM 1249 / CCUG 213 / NBRC 12614 / NCIMB 9131 / NCTC 9757 / MK)).